The chain runs to 501 residues: TGF-beta receptor type-1 (501 aa).

Positions 1–29 (MEAASAALRRCLLLIVLVAAATLLPGAKA) are cleaved as a signal peptide. At 30–124 (LQCFCHLCTK…QSAGLGPVEL (95 aa)) the chain is on the extracellular side. 5 disulfides stabilise this stretch: cysteine 32/cysteine 50, cysteine 34/cysteine 37, cysteine 44/cysteine 67, cysteine 82/cysteine 94, and cysteine 95/cysteine 100. Asparagine 41 carries N-linked (GlcNAc...) asparagine glycosylation. A helical transmembrane segment spans residues 125–145 (AAVIAGPVCFVCIALMLMVYI). At 146-501 (CHNRTVIHHR…QLSQQEGIKM (356 aa)) the chain is on the cytoplasmic side. The residue at position 163 (serine 163) is a Phosphoserine. One can recognise a GS domain in the interval 173–202 (TTLKDLIYDMTTSGSGSGLPLLVQRTIART). Residues threonine 183 and threonine 184 each carry the phosphothreonine; by TGFBR2 modification. 3 positions are modified to phosphoserine; by TGFBR2: serine 185, serine 187, and serine 189. Positions 191–192 (LP) match the FKBP1A-binding motif. The Protein kinase domain occupies 203 to 493 (IVLQESIGKG…LRIKKTLSQL (291 aa)). Residues 209-217 (IGKGRFGEV) and lysine 230 each bind ATP. The Proton acceptor role is filled by aspartate 331. A Glycyl lysine isopeptide (Lys-Gly) (interchain with G-Cter in SUMO) cross-link involves residue lysine 389.

Belongs to the protein kinase superfamily. TKL Ser/Thr protein kinase family. TGFB receptor subfamily. As to quaternary structure, homodimer; in the endoplasmic reticulum but also at the cell membrane. Heterohexamer; TGFB1, TGFB2 and TGFB3 homodimeric ligands assemble a functional receptor composed of two TGFBR1 and TGFBR2 heterodimers to form a ligand-receptor heterohexamer. The respective affinity of TGBRB1 and TGFBR2 for the ligands may modulate the kinetics of assembly of the receptor and may explain the different biological activities of TGFB1, TGFB2 and TGFB3. Component of a complex composed of TSC22D1 (via N-terminus), TGFBR1 and TGFBR2; the interaction between TSC22D1 and TGFBR1 is inhibited by SMAD7 and promoted by TGFB1. Interacts with CD109; inhibits TGF-beta receptor activation in keratinocytes. Interacts with RBPMS. Interacts with SMAD2, SMAD3 and ZFYVE9; ZFYVE9 recruits SMAD2 and SMAD3 to the TGF-beta receptor. Interacts with TRAF6 and MAP3K7; induces MAP3K7 activation by TRAF6. Interacts with PARD6A; involved in TGF-beta induced epithelial to mesenchymal transition. Interacts with NEDD4L. Interacts with SMAD7, SMURF1 and SMURF2; SMAD7 recruits NEDD4L, SMURF1 and SMURF2 to the TGF-beta receptor. Interacts with USP15 and VPS39. Interacts (unphosphorylated) with FKBP1A; prevents TGFBR1 phosphorylation by TGFBR2 and stabilizes it in the inactive conformation. Interacts with SDCBP (via C-terminus). Interacts with CAV1 and this interaction is impaired in the presence of SDCBP. Interacts with APPL1; interaction is TGF beta dependent; mediates trafficking of the TGFBR1 from the endosomes to the nucleus via microtubules in a TRAF6-dependent manner. Interacts with GPR50; this interaction promotes the constitutive activation of SMAD signaling pathway. Mg(2+) is required as a cofactor. Mn(2+) serves as cofactor. Post-translationally, phosphorylated at basal levels in the absence of ligand. Activated upon phosphorylation by TGFBR2, mainly in the GS domain. Phosphorylation in the GS domain abrogates FKBP1A-binding. In terms of processing, N-Glycosylated. Ubiquitinated; undergoes ubiquitination catalyzed by several E3 ubiquitin ligases including SMURF1, SMURF2 and NEDD4L2. Results in the proteasomal and/or lysosomal degradation of the receptor thereby negatively regulating its activity. Deubiquitinated by USP15, leading to stabilization of the protein and enhanced TGF-beta signal. Its ubiquitination and proteasome-mediated degradation is negatively regulated by SDCBP. In terms of tissue distribution, urogenital ridge, testis, ovary, brain and lungs.

It localises to the cell membrane. The protein localises to the cell junction. It is found in the tight junction. The protein resides in the membrane raft. Its subcellular location is the cell surface. The enzyme catalyses L-threonyl-[receptor-protein] + ATP = O-phospho-L-threonyl-[receptor-protein] + ADP + H(+). It carries out the reaction L-seryl-[receptor-protein] + ATP = O-phospho-L-seryl-[receptor-protein] + ADP + H(+). With respect to regulation, kept in an inactive conformation by FKBP1A preventing receptor activation in absence of ligand. CD109 is another inhibitor of the receptor. Functionally, transmembrane serine/threonine kinase forming with the TGF-beta type II serine/threonine kinase receptor, TGFBR2, the non-promiscuous receptor for the TGF-beta cytokines TGFB1, TGFB2 and TGFB3. Transduces the TGFB1, TGFB2 and TGFB3 signal from the cell surface to the cytoplasm and is thus regulating a plethora of physiological and pathological processes including cell cycle arrest in epithelial and hematopoietic cells, control of mesenchymal cell proliferation and differentiation, wound healing, extracellular matrix production, immunosuppression and carcinogenesis. The formation of the receptor complex composed of 2 TGFBR1 and 2 TGFBR2 molecules symmetrically bound to the cytokine dimer results in the phosphorylation and the activation of TGFBR1 by the constitutively active TGFBR2. Activated TGFBR1 phosphorylates SMAD2 which dissociates from the receptor and interacts with SMAD4. The SMAD2-SMAD4 complex is subsequently translocated to the nucleus where it modulates the transcription of the TGF-beta-regulated genes. This constitutes the canonical SMAD-dependent TGF-beta signaling cascade. Also involved in non-canonical, SMAD-independent TGF-beta signaling pathways. For instance, TGFBR1 induces TRAF6 autoubiquitination which in turn results in MAP3K7 ubiquitination and activation to trigger apoptosis. Also regulates epithelial to mesenchymal transition through a SMAD-independent signaling pathway through PARD6A phosphorylation and activation. This is TGF-beta receptor type-1 (Tgfbr1) from Rattus norvegicus (Rat).